Here is an 89-residue protein sequence, read N- to C-terminus: Small ribosomal subunit protein bS20 (89 aa).

Positions 68 to 89 are disordered; the sequence is PNKGARKSSRLDHFVNEQKSKQ. The segment covering 76-89 has biased composition (basic and acidic residues); sequence SRLDHFVNEQKSKQ.

Belongs to the bacterial ribosomal protein bS20 family.

Its function is as follows. Binds directly to 16S ribosomal RNA. The sequence is that of Small ribosomal subunit protein bS20 from Mycoplasmopsis agalactiae (strain NCTC 10123 / CIP 59.7 / PG2) (Mycoplasma agalactiae).